The sequence spans 103 residues: Large ribosomal subunit protein bL21 (103 aa).

Belongs to the bacterial ribosomal protein bL21 family. As to quaternary structure, part of the 50S ribosomal subunit. Contacts protein L20.

Its function is as follows. This protein binds to 23S rRNA in the presence of protein L20. The chain is Large ribosomal subunit protein bL21 from Delftia acidovorans (strain DSM 14801 / SPH-1).